The primary structure comprises 173 residues: Crossover junction endodeoxyribonuclease RuvC (173 aa).

Active-site residues include D8, E67, and D139. Residues D8, E67, and D139 each coordinate Mg(2+).

This sequence belongs to the RuvC family. In terms of assembly, homodimer which binds Holliday junction (HJ) DNA. The HJ becomes 2-fold symmetrical on binding to RuvC with unstacked arms; it has a different conformation from HJ DNA in complex with RuvA. In the full resolvosome a probable DNA-RuvA(4)-RuvB(12)-RuvC(2) complex forms which resolves the HJ. Mg(2+) is required as a cofactor.

The protein resides in the cytoplasm. It carries out the reaction Endonucleolytic cleavage at a junction such as a reciprocal single-stranded crossover between two homologous DNA duplexes (Holliday junction).. In terms of biological role, the RuvA-RuvB-RuvC complex processes Holliday junction (HJ) DNA during genetic recombination and DNA repair. Endonuclease that resolves HJ intermediates. Cleaves cruciform DNA by making single-stranded nicks across the HJ at symmetrical positions within the homologous arms, yielding a 5'-phosphate and a 3'-hydroxyl group; requires a central core of homology in the junction. The consensus cleavage sequence is 5'-(A/T)TT(C/G)-3'. Cleavage occurs on the 3'-side of the TT dinucleotide at the point of strand exchange. HJ branch migration catalyzed by RuvA-RuvB allows RuvC to scan DNA until it finds its consensus sequence, where it cleaves and resolves the cruciform DNA. The polypeptide is Crossover junction endodeoxyribonuclease RuvC (Klebsiella pneumoniae (strain 342)).